A 125-amino-acid chain; its full sequence is Large ribosomal subunit protein bL12 (125 aa).

Belongs to the bacterial ribosomal protein bL12 family. In terms of assembly, homodimer. Part of the ribosomal stalk of the 50S ribosomal subunit. Forms a multimeric L10(L12)X complex, where L10 forms an elongated spine to which 2 to 4 L12 dimers bind in a sequential fashion. Binds GTP-bound translation factors.

In terms of biological role, forms part of the ribosomal stalk which helps the ribosome interact with GTP-bound translation factors. Is thus essential for accurate translation. In Campylobacter lari (strain RM2100 / D67 / ATCC BAA-1060), this protein is Large ribosomal subunit protein bL12.